The chain runs to 622 residues: MNKDHKQSLPAVTLAAIGVVYGDIGTSPLYTLRECLAGHYGFGVERVAVFGFLSLIFWLLILIVSLKYLLFVMRADNAGEGGILTLMSLAGRNTGAKLTPVLVIIGLIGGSFFYGEVVITPAVSVMSAIEGLQIVAPSLQEFIVPLSVVVLTLLFFIQKKGTGSVGKLFAPVMLLWFLTLGVLGVRGIIYNPEVLYALNPKWAIAFFAEYRTVSFFALGAVVLAITGVEALYADMGHFGKLPIRIAWFSAVLPSLVLNYFGQGALLLSKPAAIKNPFFLLAPDWAMIPLLILATLATVIASQAVISGVFSLTRQAVRLGYMPPMRIIHTSEMEVGQIYIPFINWLLYIAVVLVIVSFEHSSNLAAAYGIAVTGTMVLTSILSCTVARKNWHLNLLIVSVLLLALLCLDVSMFAANALKIFSGGWLPLLLGFLMFIAMITWKSERFLLLRRIHEHGNSLEALIASLEKSPPVRVPGTAVFMSRAMNVIPFALLHNLKHNKVLHERVVLLTLRTEDAPFVHNVRRVTIEALSPTFWRVVASYGFKEAPDMEEIFHSCGLEGLSCRMMETSFFMSHESLILGKRPWYLMIRGKLFMVLSRNALRAPDQYLIPPNRVIELGTQIEI.

Helical transmembrane passes span 9 to 29 (LPAV…TSPL), 52 to 72 (FLSL…LLFV), 99 to 119 (TPVL…EVVI), 137 to 157 (PSLQ…LFFI), 165 to 185 (VGKL…VLGV), 213 to 233 (VSFF…ALYA), 247 to 267 (WFSA…ALLL), 276 to 296 (PFFL…ATLA), 337 to 357 (IYIP…IVSF), 363 to 383 (LAAA…ILSC), 394 to 414 (LLIV…MFAA), and 419 to 439 (IFSG…AMIT).

Belongs to the HAK/KUP transporter (TC 2.A.72) family.

It localises to the cell inner membrane. The catalysed reaction is K(+)(in) + H(+)(in) = K(+)(out) + H(+)(out). Functionally, responsible for the low-affinity transport of potassium into the cell. Likely operates as a K(+):H(+) symporter. The protein is Low affinity potassium transport system protein Kup of Sodalis glossinidius (strain morsitans).